Here is a 307-residue protein sequence, read N- to C-terminus: Putative lipid kinase SERP0390 (307 aa).

One can recognise a DAGKc domain in the interval 3–139 (QPYNHGVLFY…YDVLKVNDLY (137 aa)). ATP contacts are provided by residues Ser44, 74-80 (GDGTLNE), and Thr101. Positions 220, 223, and 225 each coordinate Mg(2+). Glu281 acts as the Proton acceptor in catalysis.

This sequence belongs to the diacylglycerol/lipid kinase family. Requires Mg(2+) as cofactor.

Its function is as follows. May catalyze the ATP-dependent phosphorylation of lipids other than diacylglycerol (DAG). The protein is Putative lipid kinase SERP0390 of Staphylococcus epidermidis (strain ATCC 35984 / DSM 28319 / BCRC 17069 / CCUG 31568 / BM 3577 / RP62A).